Here is a 1295-residue protein sequence, read N- to C-terminus: Phosphoribosylformylglycinamidine synthase (1295 aa).

Positions 305-327 (WPGAATGSGGEIRDEGATGRGAK) are disordered. Residues 307-318 (GAATGSGGEIRD), 386-388 (TGY), and A678 each bind ATP. Residues D679, E718, N722, and D884 each contribute to the Mg(2+) site. Residue S886 coordinates ATP. Positions 1042–1295 (VAVLREQGVN…IFRNARKQLG (254 aa)) constitute a Glutamine amidotransferase type-1 domain. C1135 functions as the Nucleophile in the catalytic mechanism. Active-site residues include H1260 and E1262.

In the N-terminal section; belongs to the FGAMS family. As to quaternary structure, monomer.

It is found in the cytoplasm. The catalysed reaction is N(2)-formyl-N(1)-(5-phospho-beta-D-ribosyl)glycinamide + L-glutamine + ATP + H2O = 2-formamido-N(1)-(5-O-phospho-beta-D-ribosyl)acetamidine + L-glutamate + ADP + phosphate + H(+). Its pathway is purine metabolism; IMP biosynthesis via de novo pathway; 5-amino-1-(5-phospho-D-ribosyl)imidazole from N(2)-formyl-N(1)-(5-phospho-D-ribosyl)glycinamide: step 1/2. In terms of biological role, phosphoribosylformylglycinamidine synthase involved in the purines biosynthetic pathway. Catalyzes the ATP-dependent conversion of formylglycinamide ribonucleotide (FGAR) and glutamine to yield formylglycinamidine ribonucleotide (FGAM) and glutamate. The protein is Phosphoribosylformylglycinamidine synthase of Salmonella paratyphi A (strain ATCC 9150 / SARB42).